A 211-amino-acid chain; its full sequence is Thymidylate kinase (211 aa).

7 to 14 is an ATP binding site; the sequence is GMDGSGKT.

It belongs to the thymidylate kinase family.

It carries out the reaction dTMP + ATP = dTDP + ADP. In terms of biological role, phosphorylation of dTMP to form dTDP in both de novo and salvage pathways of dTTP synthesis. This is Thymidylate kinase from Mesoplasma florum (strain ATCC 33453 / NBRC 100688 / NCTC 11704 / L1) (Acholeplasma florum).